The following is a 341-amino-acid chain: GDP-fucose transporter 1 (341 aa).

10 helical membrane passes run Leu-17–Thr-37, Tyr-41–Gly-61, Phe-71–Phe-91, Asp-103–Phe-123, Leu-132–Ser-152, Leu-156–Ile-176, Ile-187–Phe-207, Ala-231–Ala-251, Ala-260–Trp-280, and His-283–Gln-303. Positions Ser-316–Val-341 are disordered.

This sequence belongs to the nucleotide-sugar transporter family. GDP-Mannose:GMP antiporter (GMA) (TC 2.A.7.13) subfamily. As to expression, ubiquitous.

The protein localises to the golgi apparatus membrane. In terms of biological role, acts as the major nucleotide-sugar transporter for the import of GDP-Fucose into the Golgi lumen. Transports GDP-Fucose in a strict counter-exchange mode. Is required for proper plant growth and development. Also acts as a GDP-mannose transporter that may be involved in the import of GDP-mannose from the cytoplasm into the Golgi lumen. The sequence is that of GDP-fucose transporter 1 from Arabidopsis thaliana (Mouse-ear cress).